A 100-amino-acid polypeptide reads, in one-letter code: Aspartyl/glutamyl-tRNA(Asn/Gln) amidotransferase subunit C (100 aa).

This sequence belongs to the GatC family. In terms of assembly, heterotrimer of A, B and C subunits.

It carries out the reaction L-glutamyl-tRNA(Gln) + L-glutamine + ATP + H2O = L-glutaminyl-tRNA(Gln) + L-glutamate + ADP + phosphate + H(+). The enzyme catalyses L-aspartyl-tRNA(Asn) + L-glutamine + ATP + H2O = L-asparaginyl-tRNA(Asn) + L-glutamate + ADP + phosphate + 2 H(+). Its function is as follows. Allows the formation of correctly charged Asn-tRNA(Asn) or Gln-tRNA(Gln) through the transamidation of misacylated Asp-tRNA(Asn) or Glu-tRNA(Gln) in organisms which lack either or both of asparaginyl-tRNA or glutaminyl-tRNA synthetases. The reaction takes place in the presence of glutamine and ATP through an activated phospho-Asp-tRNA(Asn) or phospho-Glu-tRNA(Gln). The polypeptide is Aspartyl/glutamyl-tRNA(Asn/Gln) amidotransferase subunit C (Erythrobacter litoralis (strain HTCC2594)).